Consider the following 491-residue polypeptide: Glucose-6-phosphate 1-dehydrogenase (491 aa).

Residues R49, 91–92 (DV), and K146 contribute to the NADP(+) site. Substrate contacts are provided by H176, K180, E214, and D233. Catalysis depends on H238, which acts as the Proton acceptor. Residues K338 and K343 each coordinate substrate.

The protein belongs to the glucose-6-phosphate dehydrogenase family.

It catalyses the reaction D-glucose 6-phosphate + NADP(+) = 6-phospho-D-glucono-1,5-lactone + NADPH + H(+). It participates in carbohydrate degradation; pentose phosphate pathway; D-ribulose 5-phosphate from D-glucose 6-phosphate (oxidative stage): step 1/3. Functionally, catalyzes the oxidation of glucose 6-phosphate to 6-phosphogluconolactone. This chain is Glucose-6-phosphate 1-dehydrogenase, found in Buchnera aphidicola subsp. Acyrthosiphon pisum (strain APS) (Acyrthosiphon pisum symbiotic bacterium).